A 456-amino-acid chain; its full sequence is MTOR-associated protein MEAK7 (456 aa).

A lipid anchor (N-myristoyl glycine) is attached at glycine 2. The TLDc domain occupies 244 to 412; sequence SILDVLSVMY…FDKMEVWAVG (169 aa).

As to quaternary structure, interacts (via C-terminal domain) with MTOR and MLST8; the interaction with MTOR increases upon nutrient stimulation.

The protein localises to the membrane. It localises to the cytoplasm. Its subcellular location is the lysosome. Functionally, activates an alternative mTOR signaling through RPS6KB2 activation and EIF4EBP1 repression to regulate cell proliferation and migration. Recruits MTOR at the lysosome, essential for MTOR signaling at the lysosome. The chain is MTOR-associated protein MEAK7 from Homo sapiens (Human).